The following is a 328-amino-acid chain: Stress response kinase A (328 aa).

Residue Asp201 is the Proton acceptor of the active site. 2 residues coordinate Mg(2+): Asn206 and Asp217. Asp217 is a catalytic residue.

It belongs to the SrkA/RdoA protein kinase family. Monomer. Mg(2+) is required as a cofactor.

The protein localises to the cytoplasm. It carries out the reaction L-seryl-[protein] + ATP = O-phospho-L-seryl-[protein] + ADP + H(+). The catalysed reaction is L-threonyl-[protein] + ATP = O-phospho-L-threonyl-[protein] + ADP + H(+). Its function is as follows. A protein kinase that phosphorylates Ser and Thr residues. Probably acts to suppress the effects of stress linked to accumulation of reactive oxygen species. Probably involved in the extracytoplasmic stress response. This chain is Stress response kinase A, found in Salmonella paratyphi A (strain ATCC 9150 / SARB42).